Here is a 354-residue protein sequence, read N- to C-terminus: Probable L-ascorbate-6-phosphate lactonase UlaG (354 aa).

Belongs to the UlaG family. The cofactor is a divalent metal cation.

It is found in the cytoplasm. The catalysed reaction is L-ascorbate 6-phosphate + H2O = 3-dehydro-L-gulonate 6-phosphate. It functions in the pathway cofactor degradation; L-ascorbate degradation; D-xylulose 5-phosphate from L-ascorbate: step 1/4. In terms of biological role, probably catalyzes the hydrolysis of L-ascorbate-6-P into 3-keto-L-gulonate-6-P. Is essential for L-ascorbate utilization under anaerobic conditions. The protein is Probable L-ascorbate-6-phosphate lactonase UlaG of Salmonella choleraesuis (strain SC-B67).